Here is a 434-residue protein sequence, read N- to C-terminus: Nicotinate phosphoribosyltransferase (434 aa).

H242 carries the phosphohistidine; by autocatalysis modification.

The protein belongs to the NAPRTase family. Transiently phosphorylated on a His residue during the reaction cycle. Phosphorylation strongly increases the affinity for substrates and increases the rate of nicotinate D-ribonucleotide production. Dephosphorylation regenerates the low-affinity form of the enzyme, leading to product release.

The catalysed reaction is nicotinate + 5-phospho-alpha-D-ribose 1-diphosphate + ATP + H2O = nicotinate beta-D-ribonucleotide + ADP + phosphate + diphosphate. Its pathway is cofactor biosynthesis; NAD(+) biosynthesis; nicotinate D-ribonucleotide from nicotinate: step 1/1. Catalyzes the synthesis of beta-nicotinate D-ribonucleotide from nicotinate and 5-phospho-D-ribose 1-phosphate at the expense of ATP. In Bradyrhizobium sp. (strain BTAi1 / ATCC BAA-1182), this protein is Nicotinate phosphoribosyltransferase.